The chain runs to 106 residues: P4 prophage-derived uncharacterized protein t2655 (106 aa).

This is P4 prophage-derived uncharacterized protein t2655 from Salmonella typhi.